Consider the following 521-residue polypeptide: MRLHAFTLLSLLGLVPSFAAASLSGSVGPLTSASAKAAKKTCNVLDYGAKADKKTDLGPPLAAAFAACKSGGLVYIPAGDYAMSTWVKLANGKAWALQIDGVIYRTGTDGGNMIMIEHTSDFELYSSTSSGAMQGLGYEFHASNNWSGPRLLRLWDVSDFSVHDLILVDSPSFHFSIDTCSNGEVYNMAIRGGNHGGLDGVDVWSTNIWIHDLEVTNKDECVTVKSPAKNILVENIYCNLSGGCAMGSLGADTDISDITYKNIYTWNSNQMMMIKSNGGSGTVSNVVFENFIGHGNAYSLDIDSFWSSMSAVSGDGVTLNNITIKNWKGTEANGAQRGPIKIICPDKVPCYNILIEDFAMWTETGSKQWYSCQSAYGSGFCLKSGSHHTSYAVTTTTVSSAPSGYSAAKMASDLSTDSGSTKSIPIPTIPTSFYPGATPYSALMSKQSTKAAKARAVDMSVETPAAASRSEQVVQGAPQETGQSAPESAGPVPSGNPGPVPTGGSRPSRHRHGHHHFGSAI.

The first 21 residues, 1 to 21 (MRLHAFTLLSLLGLVPSFAAA), serve as a signal peptide directing secretion. The cysteines at positions 42 and 68 are disulfide-linked. Asparagine 145 is a glycosylation site (N-linked (GlcNAc...) asparagine). Aspartate 219 functions as the Proton donor in the catalytic mechanism. The cysteines at positions 221 and 238 are disulfide-linked. The N-linked (GlcNAc...) asparagine glycan is linked to asparagine 239. The active site involves histidine 294. Asparagine 321 carries N-linked (GlcNAc...) asparagine glycosylation. 2 disulfides stabilise this stretch: cysteine 344-cysteine 350 and cysteine 372-cysteine 381. Positions 462 to 521 (ETPAAASRSEQVVQGAPQETGQSAPESAGPVPSGNPGPVPTGGSRPSRHRHGHHHFGSAI) are disordered. The span at 469 to 486 (RSEQVVQGAPQETGQSAP) shows a compositional bias: polar residues. The span at 507-521 (PSRHRHGHHHFGSAI) shows a compositional bias: basic residues.

This sequence belongs to the glycosyl hydrolase 28 family.

The protein localises to the secreted. It catalyses the reaction Endohydrolysis of alpha-D-GalA-(1-&gt;2)-alpha-L-Rha glycosidic bond in the rhamnogalacturonan I backbone with initial inversion of anomeric configuration releasing oligosaccharides with beta-D-GalA at the reducing end.. Functionally, pectinolytic enzymes consist of four classes of enzymes: pectine lyase, polygalacturonase, pectin methylesterase and rhamnogalacturonase. Hydrolyzes alpha-D-galacturonopyranosyl-(1,2)-alpha-L-rhamnopyranosyl linkages in the backbone of the hairy regions of pectins. This is Probable rhamnogalacturonase B (rhgB) from Aspergillus fumigatus (strain ATCC MYA-4609 / CBS 101355 / FGSC A1100 / Af293) (Neosartorya fumigata).